Reading from the N-terminus, the 94-residue chain is FXYD domain-containing ion transport regulator 6 (94 aa).

A signal peptide spans 1-17; the sequence is METVLVLCSLLAPVVLA. Residues 18 to 34 are Extracellular-facing; the sequence is SAAEKEKEKDPFYYDYQ. The chain crosses the membrane as a helical span at residues 35-57; that stretch reads TLRIGGLVFAVVLFSVGILLILS. Residues 58–94 lie on the Cytoplasmic side of the membrane; that stretch reads RRCKCSFNQKPRAPGDEEAQVENLITTNAAEPQKAEN.

The protein belongs to the FXYD family. As to quaternary structure, regulatory subunit of the sodium/potassium-transporting ATPase which is composed of a catalytic alpha subunit, a non-catalytic beta subunit and an additional regulatory subunit. The regulatory subunit, a member of the FXYD protein family, modulates the enzymatic activity in a tissue- and isoform-specific way by changing affinities of the Na+/K+-ATPase toward Na(+), K(+) or ATP.

The protein resides in the cell membrane. In terms of biological role, associates with and regulates the activity of the sodium/potassium-transporting ATPase (NKA) which catalyzes the hydrolysis of ATP coupled with the exchange of Na(+) and K(+) ions across the plasma membrane. Reduces the apparent affinity for intracellular Na(+) with no change in the apparent affinity for extracellular K(+). In addition to modulating NKA kinetics, may also function as a regulator of NKA localization to the plasma membrane. In Mus musculus (Mouse), this protein is FXYD domain-containing ion transport regulator 6 (Fxyd6).